The sequence spans 268 residues: Tryptophan synthase alpha chain (268 aa).

Residues Glu49 and Asp60 each act as proton acceptor in the active site.

This sequence belongs to the TrpA family. Tetramer of two alpha and two beta chains.

It carries out the reaction (1S,2R)-1-C-(indol-3-yl)glycerol 3-phosphate + L-serine = D-glyceraldehyde 3-phosphate + L-tryptophan + H2O. It participates in amino-acid biosynthesis; L-tryptophan biosynthesis; L-tryptophan from chorismate: step 5/5. Its function is as follows. The alpha subunit is responsible for the aldol cleavage of indoleglycerol phosphate to indole and glyceraldehyde 3-phosphate. The polypeptide is Tryptophan synthase alpha chain (Mannheimia succiniciproducens (strain KCTC 0769BP / MBEL55E)).